The sequence spans 460 residues: Heme sensor protein HssS (460 aa).

Transmembrane regions (helical) follow at residues 11-31 (IYTI…TNII) and 164-184 (IFLA…VISS). Positions 186–238 (YAIIKPIQQLKRATERLMHGNFDEVIHVTRKDEFGTLQYRFDKMRLSLKQLDD) constitute an HAMP domain. One can recognise a Histidine kinase domain in the interval 246 to 456 (NVSHEIKTPL…TFTITFKKVP (211 aa)). His249 is modified (phosphohistidine; by autocatalysis).

Autophosphorylated.

The protein resides in the cell membrane. The enzyme catalyses ATP + protein L-histidine = ADP + protein N-phospho-L-histidine.. In terms of biological role, member of the two-component regulatory system HssS/HssR involved in intracellular heme homeostasis and tempering of staphylococcal virulence. HssS functions as a heme sensor histidine kinase which is autophosphorylated at a histidine residue and transfers its phosphate group to an aspartate residue of HssR. HssR/HssS activates the expression of hrtAB, an efflux pump, in response to extracellular heme, hemin, hemoglobin or blood. The polypeptide is Heme sensor protein HssS (hssS) (Staphylococcus saprophyticus subsp. saprophyticus (strain ATCC 15305 / DSM 20229 / NCIMB 8711 / NCTC 7292 / S-41)).